Consider the following 401-residue polypeptide: Deoxyhypusine synthase-like protein (401 aa).

Belongs to the deoxyhypusine synthase family.

The polypeptide is Deoxyhypusine synthase-like protein (Thermosynechococcus vestitus (strain NIES-2133 / IAM M-273 / BP-1)).